The sequence spans 197 residues: Pyridoxal 5'-phosphate synthase subunit PdxT (197 aa).

53–55 is an L-glutamine binding site; the sequence is GES. The active-site Nucleophile is the cysteine 85. Residues arginine 114 and 142 to 143 each bind L-glutamine; that span reads IR. Active-site charge relay system residues include histidine 179 and glutamate 181.

The protein belongs to the glutaminase PdxT/SNO family. As to quaternary structure, in the presence of PdxS, forms a dodecamer of heterodimers. Only shows activity in the heterodimer.

It catalyses the reaction aldehydo-D-ribose 5-phosphate + D-glyceraldehyde 3-phosphate + L-glutamine = pyridoxal 5'-phosphate + L-glutamate + phosphate + 3 H2O + H(+). The enzyme catalyses L-glutamine + H2O = L-glutamate + NH4(+). The protein operates within cofactor biosynthesis; pyridoxal 5'-phosphate biosynthesis. Catalyzes the hydrolysis of glutamine to glutamate and ammonia as part of the biosynthesis of pyridoxal 5'-phosphate. The resulting ammonia molecule is channeled to the active site of PdxS. This Thermococcus gammatolerans (strain DSM 15229 / JCM 11827 / EJ3) protein is Pyridoxal 5'-phosphate synthase subunit PdxT.